The chain runs to 426 residues: D-tagatose-1,6-bisphosphate aldolase subunit KbaZ (426 aa).

This sequence belongs to the GatZ/KbaZ family. KbaZ subfamily. Forms a complex with KbaY.

It participates in carbohydrate metabolism; D-tagatose 6-phosphate degradation; D-glyceraldehyde 3-phosphate and glycerone phosphate from D-tagatose 6-phosphate: step 2/2. In terms of biological role, component of the tagatose-1,6-bisphosphate aldolase KbaYZ that is required for full activity and stability of the Y subunit. Could have a chaperone-like function for the proper and stable folding of KbaY. When expressed alone, KbaZ does not show any aldolase activity. In Escherichia coli O6:H1 (strain CFT073 / ATCC 700928 / UPEC), this protein is D-tagatose-1,6-bisphosphate aldolase subunit KbaZ.